Reading from the N-terminus, the 222-residue chain is Adenylate kinase (222 aa).

Ser2 is a propeptide (removed in mature form). 2 positions are modified to N-acetylserine: Ser2 and Ser3. 16–21 (GAGKGT) contacts ATP. The segment at 36–65 (ATGDMLRSQIAKGTQLGLEAKKIMDQGGLV) is NMP. AMP is bound by residues Thr37, Arg42, 63–65 (GLV), 92–95 (GFPR), and Gln99. The tract at residues 133–170 (GRLIHPASGRSYHKIFNPPKEDMKDDVTGEALVQRSDD) is LID. Residues Arg134 and 143 to 144 (SY) each bind ATP. The AMP site is built by Arg167 and Arg178. Residue Gln206 participates in ATP binding.

Belongs to the adenylate kinase family. AK2 subfamily. In terms of assembly, monomer.

The protein resides in the cytoplasm. It localises to the cytosol. The protein localises to the mitochondrion intermembrane space. The enzyme catalyses AMP + ATP = 2 ADP. Functionally, catalyzes the reversible transfer of the terminal phosphate group between ATP and AMP. Plays an important role in cellular energy homeostasis and in adenine nucleotide metabolism. Adenylate kinase activity is critical for regulation of the phosphate utilization and the AMP de novo biosynthesis pathways. The sequence is that of Adenylate kinase from Saccharomyces cerevisiae (strain RM11-1a) (Baker's yeast).